The following is a 151-amino-acid chain: MAPRKGKEKKEEQVISLGPQVAEGENVFGVCHIFASFNDTFVHVTDLSGKETICRVTGGMKVKADRDESSPYAAMLAAQDVAQRCKELGITALHIKLRATGGNRTKTPGPGAQSALRALARSGMKIGRIEDVTPIPSDSTRRKGGRRGRRL.

Serine 16 carries the post-translational modification Phosphoserine. Residues lysine 61, lysine 63, and lysine 106 each participate in a glycyl lysine isopeptide (Lys-Gly) (interchain with G-Cter in SUMO2) cross-link. A disordered region spans residues 131 to 151 (DVTPIPSDSTRRKGGRRGRRL). Threonine 133 carries the phosphothreonine modification. Serine 139 is subject to Phosphoserine. Positions 142-151 (RKGGRRGRRL) are enriched in basic residues.

The protein belongs to the universal ribosomal protein uS11 family. Component of the small ribosomal subunit. Part of the small subunit (SSU) processome, composed of more than 70 proteins and the RNA chaperone small nucleolar RNA (snoRNA) U3.

The protein resides in the cytoplasm. The protein localises to the nucleus. Its subcellular location is the nucleolus. Functionally, component of the small ribosomal subunit. The ribosome is a large ribonucleoprotein complex responsible for the synthesis of proteins in the cell. Part of the small subunit (SSU) processome, first precursor of the small eukaryotic ribosomal subunit. During the assembly of the SSU processome in the nucleolus, many ribosome biogenesis factors, an RNA chaperone and ribosomal proteins associate with the nascent pre-rRNA and work in concert to generate RNA folding, modifications, rearrangements and cleavage as well as targeted degradation of pre-ribosomal RNA by the RNA exosome. This is Small ribosomal subunit protein uS11 (Rps14) from Mus musculus (Mouse).